We begin with the raw amino-acid sequence, 640 residues long: Preterminal protein (640 aa).

Residues 232–257 (PSQEGEGEERENPDRASSRPRPQETV) are disordered. Residues 351 to 360 (RLPVRRRRRR) carry the Nuclear localization signal motif. Ser-549 is modified (O-(5'-phospho-DNA)-serine). The disordered stretch occupies residues 614 to 640 (GADVPLPAMPPGPEPPLPPGARPRHRF). Over residues 620–634 (PAMPPGPEPPLPPGA) the composition is skewed to pro residues.

Belongs to the adenoviridae terminal protein family. As to quaternary structure, heterodimer with the polymerase; this heterodimer binds to bp 9 to 18 of the genome. Interacts with host POU2F1; POU2F1 binds to the auxiliary sequences in the inverted terminal repeats and tethers the pTP-POL heterodimer to the origin DNA thereby participating in the assembly of the pre-initiation complex (POL-TP-DBP-NFIA-POU2F1). In terms of processing, preterminal protein is used to replicate viral genome, upon genomic encapsidation it is processed first into iTP and finally into TP by adenovirus protease.

Its subcellular location is the host nucleus matrix. Functionally, protein covalently bound to the viral DNA that acts as a primer for viral genomic replication by DNA strand displacement. Assembles on the viral origin of replication in an initiation complex with viral polymerase, DBP, host NFIA and host POU2F1/OCT1. During initiation, the polymerase covalently couples the first dCTP with Ser-580 of pTP. The terminal protein stimulates the template activity over 20 fold compared to protein-free templates. Neo-synthesized viral genomes are linked to two preterminal proteins, one for each 5' end. These new genomes are encapsidated in the nucleus, and during capsid maturation by viral protease, preterminal protein is first cleaved into intermediary (iTP), then into mature TP. May play a role in host nuclear matrix localization of genomic DNA. This is Preterminal protein from Human adenovirus B serotype 7 (HAdV-7).